A 118-amino-acid polypeptide reads, in one-letter code: Small ribosomal subunit protein uS13 (118 aa).

The interval 94–118 (GLPVRGQRTKTNARTRKGPRKPIKK) is disordered.

Belongs to the universal ribosomal protein uS13 family. In terms of assembly, part of the 30S ribosomal subunit. Forms a loose heterodimer with protein S19. Forms two bridges to the 50S subunit in the 70S ribosome.

Its function is as follows. Located at the top of the head of the 30S subunit, it contacts several helices of the 16S rRNA. In the 70S ribosome it contacts the 23S rRNA (bridge B1a) and protein L5 of the 50S subunit (bridge B1b), connecting the 2 subunits; these bridges are implicated in subunit movement. Contacts the tRNAs in the A and P-sites. The polypeptide is Small ribosomal subunit protein uS13 (Klebsiella pneumoniae (strain 342)).